A 165-amino-acid chain; its full sequence is RNA pyrophosphohydrolase (165 aa).

One can recognise a Nudix hydrolase domain in the interval 13 to 154 (PYRQGVGIML…KRPVYEQVVA (142 aa)). A Nudix box motif is present at residues 46–67 (GGIDAGEDPETAAWREMEEEIG).

Belongs to the Nudix hydrolase family. RppH subfamily. A divalent metal cation serves as cofactor.

Accelerates the degradation of transcripts by removing pyrophosphate from the 5'-end of triphosphorylated RNA, leading to a more labile monophosphorylated state that can stimulate subsequent ribonuclease cleavage. This Rhodospirillum rubrum (strain ATCC 11170 / ATH 1.1.1 / DSM 467 / LMG 4362 / NCIMB 8255 / S1) protein is RNA pyrophosphohydrolase.